Consider the following 343-residue polypeptide: Arginine-hydroxylase NDUFAF5, mitochondrial (343 aa).

Residues 1 to 29 (MLRKVVLLRLCPLLGRPAVSASSGSRREV) constitute a mitochondrion transit peptide.

It belongs to the methyltransferase superfamily. In terms of assembly, interacts with NDUFAF8, leading to stabilize NDUFAF5. Interacts with NDUFS7. Interacts with PYURF (via TRM112 domain); the interaction is direct and stabilizes NDUFAF5 protein.

Its subcellular location is the mitochondrion inner membrane. Its function is as follows. Arginine hydroxylase that mediates hydroxylation of 'Arg-122' of NDUFS7 and is involved in the assembly of mitochondrial NADH:ubiquinone oxidoreductase complex (complex I, MT-ND1) at early stages. May also have methyltransferase activity. The polypeptide is Arginine-hydroxylase NDUFAF5, mitochondrial (Mus musculus (Mouse)).